The primary structure comprises 150 residues: Urease accessory protein UreE (150 aa).

It belongs to the UreE family.

Its subcellular location is the cytoplasm. Functionally, involved in urease metallocenter assembly. Binds nickel. Probably functions as a nickel donor during metallocenter assembly. The polypeptide is Urease accessory protein UreE (Staphylococcus saprophyticus subsp. saprophyticus (strain ATCC 15305 / DSM 20229 / NCIMB 8711 / NCTC 7292 / S-41)).